A 254-amino-acid chain; its full sequence is Acetylglutamate kinase (254 aa).

Residues 40-41, arginine 62, and asparagine 158 each bind substrate; that span reads GG.

Belongs to the acetylglutamate kinase family. ArgB subfamily.

It localises to the cytoplasm. It carries out the reaction N-acetyl-L-glutamate + ATP = N-acetyl-L-glutamyl 5-phosphate + ADP. It functions in the pathway amino-acid biosynthesis; L-arginine biosynthesis; N(2)-acetyl-L-ornithine from L-glutamate: step 2/4. Functionally, catalyzes the ATP-dependent phosphorylation of N-acetyl-L-glutamate. This Chloroflexus aurantiacus (strain ATCC 29366 / DSM 635 / J-10-fl) protein is Acetylglutamate kinase.